The primary structure comprises 85 residues: Large ribosomal subunit protein bL27 (85 aa).

Residues 1–10 (MAQKKGGGST) show a composition bias toward gly residues. The interval 1–20 (MAQKKGGGSTRNGRDSQPKM) is disordered.

Belongs to the bacterial ribosomal protein bL27 family.

The protein is Large ribosomal subunit protein bL27 of Methylibium petroleiphilum (strain ATCC BAA-1232 / LMG 22953 / PM1).